A 386-amino-acid polypeptide reads, in one-letter code: Alpha-D-kanosaminyltransferase (386 aa).

It belongs to the glycosyltransferase group 1 family.

The catalysed reaction is 2'-deamino-2'-hydroxyneamine + UDP-alpha-D-kanosamine = kanamycin A + UDP + H(+). It carries out the reaction neamine + UDP-alpha-D-kanosamine = kanamycin B + UDP + H(+). It catalyses the reaction paromamine + UDP-alpha-D-kanosamine = kanamycin C + UDP + H(+). The enzyme catalyses 2'-deamino-2'-hydroxyparomamine + UDP-alpha-D-kanosamine = kanamycin X + UDP + H(+). Its pathway is antibiotic biosynthesis; kanamycin biosynthesis. Functionally, glycosyltransferase involved in the biosynthesis of kanamycins by catalyzing the transfer of the hexose kanosamine from UDP-alpha-D-kanosamine to disaccharide precursors. Can also use UDP-alpha-D-glucose as sugar donor with much lower efficiency. This Streptomyces kanamyceticus protein is Alpha-D-kanosaminyltransferase (kanE).